Reading from the N-terminus, the 968-residue chain is Pumilio homolog 1 (968 aa).

2 disordered regions span residues methionine 1 to lysine 25 and asparagine 138 to serine 171. Serine 194 is modified (phosphoserine). Disordered stretches follow at residues glycine 204 to isoleucine 240, glycine 260 to glycine 303, and lysine 360 to serine 382. Composition is skewed to polar residues over residues glutamine 211–asparagine 220 and aspartate 227–glutamine 238. Threonine 261 is subject to Phosphothreonine. Positions threonine 291 to glycine 303 are enriched in polar residues. The PUM-HD domain occupies phenylalanine 610–valine 950. Pumilio repeat units lie at residues glutamate 630–glutamate 665, glutamate 666–glutamate 701, lysine 702–lysine 737, glutamate 738–serine 773, threonine 774–glutamate 810, glutamate 811–lysine 846, glutamate 847–asparagine 882, and glutamate 883–threonine 924.

It localises to the cytoplasm. Its function is as follows. Sequence-specific RNA-binding protein that regulates translation and mRNA stability by binding the 3'-UTR of target mRNAs. Binds the APUM-binding elements (APBEs) in the 3'-UTR mRNA sequence of CLV1, PNH, WUS and FAS2. In Arabidopsis thaliana (Mouse-ear cress), this protein is Pumilio homolog 1 (APUM1).